The primary structure comprises 117 residues: Large ribosomal subunit protein uL22 (117 aa).

The protein belongs to the universal ribosomal protein uL22 family. As to quaternary structure, part of the 50S ribosomal subunit.

In terms of biological role, this protein binds specifically to 23S rRNA; its binding is stimulated by other ribosomal proteins, e.g. L4, L17, and L20. It is important during the early stages of 50S assembly. It makes multiple contacts with different domains of the 23S rRNA in the assembled 50S subunit and ribosome. The globular domain of the protein is located near the polypeptide exit tunnel on the outside of the subunit, while an extended beta-hairpin is found that lines the wall of the exit tunnel in the center of the 70S ribosome. This is Large ribosomal subunit protein uL22 from Synechococcus elongatus (strain ATCC 33912 / PCC 7942 / FACHB-805) (Anacystis nidulans R2).